A 513-amino-acid polypeptide reads, in one-letter code: GMP synthase [glutamine-hydrolyzing] (513 aa).

Residues 3-200 enclose the Glutamine amidotransferase type-1 domain; sequence SVLVLDFGSQ…LITIAGITPD (198 aa). Cysteine 80 serves as the catalytic Nucleophile. Active-site residues include histidine 174 and glutamate 176. Positions 201 to 388 constitute a GMPS ATP-PPase domain; that stretch reads WSSKSFIEHQ…LGIAEDILMR (188 aa). An ATP-binding site is contributed by 228-234; sequence SGGVDST.

In terms of assembly, homodimer.

It carries out the reaction XMP + L-glutamine + ATP + H2O = GMP + L-glutamate + AMP + diphosphate + 2 H(+). It participates in purine metabolism; GMP biosynthesis; GMP from XMP (L-Gln route): step 1/1. In terms of biological role, catalyzes the synthesis of GMP from XMP. The sequence is that of GMP synthase [glutamine-hydrolyzing] from Pelodictyon phaeoclathratiforme (strain DSM 5477 / BU-1).